We begin with the raw amino-acid sequence, 567 residues long: MTELDKRHRSSIYDSMVKSPNRAMLRATGMTDKDFETSIVGVISTWAENTPCNIHLHDFGKLAKEGVKSAGAWPVQFGTITVADGIAMGTPGMRFSLTSRDIIADSIEAAMSGHNVDAFVAIGGCDKNMPGSMIAIANMDIPAIFAYGGTIAPGNLDGKDIDLVSVFEGIGKWNHGDMTAEDVKRLECNACPGPGGCGGMYTANTMATAIEVLGMSLPGSSSHPAESADKKEDIEAAGRAVVKMLELGLKPSDILTREAFEDAITVTMALGGSTNATLHLLAIAHAANVDLSLEDFNTIQERVPHLADLKPSGQYVFQDLYEVGGVPAVMKYLLANGFLHGDRITCTGKTVAENLADFADLTPGQKVIMPLENPKRADGPLIILNGNLAPDGAVAKVSGVKVRRHVGPAKVFDSEEDAIQAVLTDEIVDGDVVVVRFVGPKGGPGMPEMLSLSSMIVGKGQGDKVALLTDGRFSGGTYGLVVGHIAPEAQDGGPIAYLRTGDIVTVDQDTKEISMAVSEEELEKRKAETTLPPLYSRGVLGKYAHIVSSASRGAVTDFWNMDKSGKK.

Residue C52 coordinates [2Fe-2S] cluster. D84 serves as a coordination point for Mg(2+). Position 125 (C125) interacts with [2Fe-2S] cluster. The Mg(2+) site is built by D126 and K127. K127 carries the N6-carboxylysine modification. Residue C197 coordinates [2Fe-2S] cluster. E448 is a Mg(2+) binding site. S474 serves as the catalytic Proton acceptor.

This sequence belongs to the IlvD/Edd family. As to quaternary structure, homodimer. Requires [2Fe-2S] cluster as cofactor. Mg(2+) is required as a cofactor.

The enzyme catalyses (2R)-2,3-dihydroxy-3-methylbutanoate = 3-methyl-2-oxobutanoate + H2O. It carries out the reaction (2R,3R)-2,3-dihydroxy-3-methylpentanoate = (S)-3-methyl-2-oxopentanoate + H2O. It functions in the pathway amino-acid biosynthesis; L-isoleucine biosynthesis; L-isoleucine from 2-oxobutanoate: step 3/4. The protein operates within amino-acid biosynthesis; L-valine biosynthesis; L-valine from pyruvate: step 3/4. Functions in the biosynthesis of branched-chain amino acids. Catalyzes the dehydration of (2R,3R)-2,3-dihydroxy-3-methylpentanoate (2,3-dihydroxy-3-methylvalerate) into 2-oxo-3-methylpentanoate (2-oxo-3-methylvalerate) and of (2R)-2,3-dihydroxy-3-methylbutanoate (2,3-dihydroxyisovalerate) into 2-oxo-3-methylbutanoate (2-oxoisovalerate), the penultimate precursor to L-isoleucine and L-valine, respectively. The polypeptide is Dihydroxy-acid dehydratase (Streptococcus pneumoniae serotype 2 (strain D39 / NCTC 7466)).